The following is a 417-amino-acid chain: UDP-N-acetylglucosamine 1-carboxyvinyltransferase (417 aa).

Residue 22 to 23 (KN) participates in phosphoenolpyruvate binding. Arginine 93 is a UDP-N-acetyl-alpha-D-glucosamine binding site. The active-site Proton donor is the cysteine 117. Position 117 is a 2-(S-cysteinyl)pyruvic acid O-phosphothioketal (cysteine 117). UDP-N-acetyl-alpha-D-glucosamine contacts are provided by residues 122–126 (RPVDQ), aspartate 304, and isoleucine 326.

The protein belongs to the EPSP synthase family. MurA subfamily.

The protein resides in the cytoplasm. The enzyme catalyses phosphoenolpyruvate + UDP-N-acetyl-alpha-D-glucosamine = UDP-N-acetyl-3-O-(1-carboxyvinyl)-alpha-D-glucosamine + phosphate. It functions in the pathway cell wall biogenesis; peptidoglycan biosynthesis. Its function is as follows. Cell wall formation. Adds enolpyruvyl to UDP-N-acetylglucosamine. This chain is UDP-N-acetylglucosamine 1-carboxyvinyltransferase, found in Laribacter hongkongensis (strain HLHK9).